Reading from the N-terminus, the 152-residue chain is Large ribosomal subunit protein bL9 (152 aa).

Belongs to the bacterial ribosomal protein bL9 family.

In terms of biological role, binds to the 23S rRNA. The protein is Large ribosomal subunit protein bL9 of Streptococcus thermophilus (strain CNRZ 1066).